We begin with the raw amino-acid sequence, 98 residues long: Small ribosomal subunit protein bS18 (98 aa).

It belongs to the bacterial ribosomal protein bS18 family. In terms of assembly, part of the 30S ribosomal subunit. Forms a tight heterodimer with protein bS6.

In terms of biological role, binds as a heterodimer with protein bS6 to the central domain of the 16S rRNA, where it helps stabilize the platform of the 30S subunit. This is Small ribosomal subunit protein bS18 from Flavobacterium johnsoniae (strain ATCC 17061 / DSM 2064 / JCM 8514 / BCRC 14874 / CCUG 350202 / NBRC 14942 / NCIMB 11054 / UW101) (Cytophaga johnsonae).